Consider the following 294-residue polypeptide: Lycopene elongase/hydratase (294 aa).

8 helical membrane-spanning segments follow: residues 31 to 51 (FWLY…DGPG), 53 to 73 (LFSP…NVFL), 115 to 135 (LALL…LAWM), 160 to 180 (GLYI…APPA), 182 to 202 (AVVG…IPDI), 222 to 242 (TYYY…FTHW), 243 to 263 (VFGV…GVGV), and 274 to 294 (AINT…MLYG).

Belongs to the UbiA prenyltransferase family.

Its subcellular location is the cell membrane. The catalysed reaction is all-trans-lycopene + dimethylallyl diphosphate + H2O = dihydroisopentenyldehydrorhodopin + diphosphate. It catalyses the reaction isopentenyldehydrorhodopin + dimethylallyl diphosphate + H2O = dihydrobisanhydrobacterioruberin + diphosphate. It participates in carotenoid biosynthesis. In terms of biological role, involved in the biosynthesis of the acyclic C50 carotenoid bacterioruberin (BR). Acts as a bifunctional elongase/hydratase that catalyzes the elongation of lycopene by attaching a C(5) isoprene unit at C-2, as well as the hydroxylation of the previous end of the molecule. The enzyme acts at both ends of the substrate, and catalyzes the conversion of lycopene to the C(45) intermediate dihydroisopentenyldehydrorhodopin (DH-IDR) and the conversion of isopentenyldehydrorhodopin (IDR) to the C(50) carotenoid dihydrobisanhydrobacterioruberin (DH-BABR). Can also catalyze the conversion of lycopene to tetrahydrobisanhydrobacterioruberin (TH-BABR). The protein is Lycopene elongase/hydratase of Haloarcula japonica (strain ATCC 49778 / DSM 6131 / JCM 7785 / NBRC 101032 / NCIMB 13157 / TR-1).